Reading from the N-terminus, the 115-residue chain is Cysteine-rich venom protein 5 (115 aa).

The first 22 residues, 1 to 22 (MSKVMIIMLVGMIFAIISTVSG), serve as a signal peptide directing secretion. Cystine bridges form between Cys26-Cys41, Cys33-Cys44, and Cys40-Cys51. A disordered region spans residues 54–115 (RIGPPINTQP…RKPTNRPRSH (62 aa)). 2 stretches are compositionally biased toward basic residues: residues 68 to 77 (QPTRRTRGPK) and 86 to 115 (NRTR…PRSH).

In terms of tissue distribution, expressed by the venom gland.

Its subcellular location is the secreted. This Pimpla hypochondriaca (Parasitoid wasp) protein is Cysteine-rich venom protein 5.